The sequence spans 150 residues: Ribonuclease K6 (150 aa).

Positions 1–23 (MVLCFPLLLLLLVLWGPVCPLHA) are cleaved as a signal peptide. His-38 acts as the Proton acceptor in catalysis. 4 disulfide bridges follow: Cys-46–Cys-104, Cys-60–Cys-114, Cys-78–Cys-129, and Cys-85–Cys-92. Residue Asn-55 is glycosylated (N-linked (GlcNAc...) asparagine). Residues 61–65 (KHQNT) and Lys-86 each bind substrate. N-linked (GlcNAc...) asparagine glycosylation occurs at Asn-100. Residue Arg-105 coordinates substrate. His-145 (proton donor) is an active-site residue.

The protein belongs to the pancreatic ribonuclease family. As to quaternary structure, interacts (via N-terminus) with bacterial lipopolysaccharide (LPS). In terms of tissue distribution, highly expressed in spleen (at protein level). Has little or no expression in healthy kidneys (at protein level). Detected in interstitial leukocytes in infected kidneys (at protein level). Expressed in ureter where it localizes to urothelial and submucosal leukocytes (at protein level). Strong expression in lung and thymus, and lower expression in heart, placenta, pancreas, liver, brain and skeletal muscle. Also expressed in monocytes and neutrophils.

Its subcellular location is the secreted. The protein localises to the lysosome. The protein resides in the cytoplasmic granule. Ribonuclease which shows a preference for the pyrimidines uridine and cytosine. Has potent antibacterial activity against a range of Gram-positive and Gram-negative bacteria, including P.aeruginosa, A.baumanii, M.luteus, S.aureus, E.faecalis, E.faecium, S.saprophyticus and E.coli. Causes loss of bacterial membrane integrity, and also promotes agglutination of Gram-negative bacteria. Probably contributes to urinary tract sterility. Bactericidal activity is independent of RNase activity. The polypeptide is Ribonuclease K6 (RNASE6) (Homo sapiens (Human)).